The chain runs to 342 residues: Phenylalanine--tRNA ligase alpha subunit (342 aa).

Glu-257 lines the Mg(2+) pocket.

The protein belongs to the class-II aminoacyl-tRNA synthetase family. Phe-tRNA synthetase alpha subunit type 1 subfamily. Tetramer of two alpha and two beta subunits. Mg(2+) serves as cofactor.

It localises to the cytoplasm. The catalysed reaction is tRNA(Phe) + L-phenylalanine + ATP = L-phenylalanyl-tRNA(Phe) + AMP + diphosphate + H(+). The chain is Phenylalanine--tRNA ligase alpha subunit (pheS) from Chlamydia trachomatis serovar D (strain ATCC VR-885 / DSM 19411 / UW-3/Cx).